We begin with the raw amino-acid sequence, 99 residues long: MVRTMPGALYPRAGLSLFLLYLVLAAVLLRPQPLRPQRSVPEEFSAPLELSQPLSGLVDDYGVRPKHPWPRGPRPLLSRAQQRKRDGPDMAEYYYNAHL.

Residues 7-29 form a helical membrane-spanning segment; sequence GALYPRAGLSLFLLYLVLAAVLL. Positions 65 to 88 are disordered; sequence PKHPWPRGPRPLLSRAQQRKRDGP.

In terms of assembly, interacts with SPPL2C (via active sites); the interaction stabilizes FREY1 protein and inhibits SPPL2C proteolytic activity. Interacts with IZUMO1; the interaction retains IZUMO1 at the endoplasmic reticulum membrane and coordinates IZUMO1 complex assembly.

It localises to the endoplasmic reticulum membrane. Functionally, key regulator for male fertility expressed transiently in round spermatids where it recruits IZUMO1 at the endoplasmic reticulum (ER) membrane and coordinates the oolemmal binding multimeric complex (IZUMO1 complex) assembly. Upon complete assembly of the IZUMO1 complex, its ER retention is released, facilitating IZUMO1 complex export to the acrosome. Through the interaction with SPPL2C, inhibits its intramembrane protease activity directly accessing the catalytic center of an I-CLiP. The chain is Protein Frey from Ailuropoda melanoleuca (Giant panda).